The sequence spans 35 residues: Photosystem II reaction center protein T (35 aa).

The helical transmembrane segment at 3 to 23 (ALVYTFLLIGTLGIIFFAIFF) threads the bilayer.

Belongs to the PsbT family. In terms of assembly, PSII is composed of 1 copy each of membrane proteins PsbA, PsbB, PsbC, PsbD, PsbE, PsbF, PsbH, PsbI, PsbJ, PsbK, PsbL, PsbM, PsbT, PsbY, PsbZ, Psb30/Ycf12, at least 3 peripheral proteins of the oxygen-evolving complex and a large number of cofactors. It forms dimeric complexes.

The protein resides in the plastid. It localises to the chloroplast thylakoid membrane. In terms of biological role, found at the monomer-monomer interface of the photosystem II (PS II) dimer, plays a role in assembly and dimerization of PSII. PSII is a light-driven water plastoquinone oxidoreductase, using light energy to abstract electrons from H(2)O, generating a proton gradient subsequently used for ATP formation. In Coleochaete orbicularis (Charophycean green alga), this protein is Photosystem II reaction center protein T.